Consider the following 637-residue polypeptide: 3D-(3,5/4)-trihydroxycyclohexane-1,2-dione hydrolase (637 aa).

Glu-66 serves as a coordination point for thiamine diphosphate. Residues 442–522 form a thiamine pyrophosphate binding region; the sequence is SLPGDLQRLW…INVLLFDNSG (81 aa). Mg(2+)-binding residues include Asp-493 and Asn-520.

Belongs to the TPP enzyme family. Requires Mg(2+) as cofactor. It depends on thiamine diphosphate as a cofactor.

The enzyme catalyses 3D-3,5/4-trihydroxycyclohexane-1,2-dione + H2O = 5-deoxy-D-glucuronate + H(+). Its pathway is polyol metabolism; myo-inositol degradation into acetyl-CoA; acetyl-CoA from myo-inositol: step 3/7. In terms of biological role, involved in the cleavage of the C1-C2 bond of 3D-(3,5/4)-trihydroxycyclohexane-1,2-dione (THcHDO) to yield 5-deoxy-glucuronate (5DG). In Bacillus velezensis (strain DSM 23117 / BGSC 10A6 / LMG 26770 / FZB42) (Bacillus amyloliquefaciens subsp. plantarum), this protein is 3D-(3,5/4)-trihydroxycyclohexane-1,2-dione hydrolase.